An 849-amino-acid polypeptide reads, in one-letter code: MNNMDGSENNAKVSDSAYSNSCSNSQSRRSHSSKSTHSGSNSSGSSGYGGQPSTSSSSNDLSDQKKEKELKKKKQVETLMPDTQIEVECRPEEDVINIPSEEGGAADDVLVPSPKQTLQTDNDIADIEVAIPDTNNDKEEAIVYNTSLINPGTACPFGRPALSNCNGFSCVISMHDGVVLYATASLTSTLGFPKDMWVGRSFIDFVHPRDRNTFASQITNELAIPKIVSLTEETDQTMENPGSTMVCRIRRYRGLSCGFSVKNTTTAYLPFLLKFKFKNVNEDKGNVIYLVIQAVPFFSAFKTSNEVLAKTVSFVIRHSADGNLEYIDAESVPYLGYLPQDITNRDALLLYHPGDLGYLQEIYGSLVKEGNVTRSKTYRMMTQNGHYMKVETEWSAFINPWSKKLEFVTGKHYIIEGPANPDVFQNPENVLKLTEEQKNQAKMYRDSIIRIMKDVLTKPAEIAKQQMSKRCQDLAHFMEMLIEEQPKPVDDLRLEIQDADHSYYERDSVILGGISPHHEYDSKSSTETPLSYNQLNYNDNLQRYFNSHQSNAFVDNNLLPSRNPLYLSAPHFSESIKNVPSAMEYSGDVIDLTGPGETSGVIVFNKSPTMGLKTGKPIRLTESSLTKHNAEMEKELMKIHREHRCYSKGDRVKVSNEARQKKKEHLARCNAGFQTISAANNTPSVYEKPHNLKRSSKQMESEPIANKHHCPSSRQFRRKQTTCSGGFAQPPSATNPVSTSSQWSSSPVNNVNPFILGVRMQPPMPILSPLPVVSGMFPMYYTPVTATVTTSEGRPSEPNYHRNNMNNNQFQQPLGNSRLPTTICVIQCGTSRIIHSFRGTRTTGGTRYT.

Residues 1–13 are compositionally biased toward polar residues; sequence MNNMDGSENNAKV. The interval 1 to 79 is disordered; sequence MNNMDGSENN…LKKKKQVETL (79 aa). 2 stretches are compositionally biased toward low complexity: residues 14 to 27 and 35 to 58; these read SDSA…NSQS and STHS…SSSS. A Nuclear localization signal motif is present at residues 63–74; sequence DQKKEKELKKKK. 2 consecutive PAS domains span residues 166–296 and 314–416; these read NGFS…QAVP and FVIR…YIIE. The disordered stretch occupies residues 680–746; that stretch reads NNTPSVYEKP…VSTSSQWSSS (67 aa). Basic residues predominate over residues 706–720; that stretch reads NKHHCPSSRQFRRKQ. Low complexity predominate over residues 735-746; it reads NPVSTSSQWSSS.

As to quaternary structure, forms a heterodimer with timeless (TIM); the complex then translocates into the nucleus. Post-translationally, phosphorylated with a circadian rhythmicity.

The protein resides in the nucleus. Its function is as follows. Involved in the generation of biological rhythms. The biological cycle depends on the rhythmic formation and nuclear localization of the tim-per complex. Light induces the degradation of tim, which promotes elimination of per. Nuclear activity of the heterodimer coordinatively regulates per and tim transcription negative feedback loop. Behaves as a negative element in circadian transcriptional loop. Does not appear to bind DNA, suggesting indirect transcriptional inhibition. Expression exhibits prominent circadian variation in adult heads and in particular in the photoreceptor nuclei. This is Period circadian protein (per) from Antheraea pernyi (Chinese oak silk moth).